The primary structure comprises 300 residues: Sulfate adenylyltransferase subunit 2 (300 aa).

It belongs to the PAPS reductase family. CysD subfamily. In terms of assembly, heterodimer composed of CysD, the smaller subunit, and CysN.

The catalysed reaction is sulfate + ATP + H(+) = adenosine 5'-phosphosulfate + diphosphate. It participates in sulfur metabolism; hydrogen sulfide biosynthesis; sulfite from sulfate: step 1/3. Functionally, with CysN forms the ATP sulfurylase (ATPS) that catalyzes the adenylation of sulfate producing adenosine 5'-phosphosulfate (APS) and diphosphate, the first enzymatic step in sulfur assimilation pathway. APS synthesis involves the formation of a high-energy phosphoric-sulfuric acid anhydride bond driven by GTP hydrolysis by CysN coupled to ATP hydrolysis by CysD. This is Sulfate adenylyltransferase subunit 2 from Magnetococcus marinus (strain ATCC BAA-1437 / JCM 17883 / MC-1).